Consider the following 151-residue polypeptide: Caveolin-3 (151 aa).

The Cytoplasmic portion of the chain corresponds to 1-83 (MMAEEHTDLE…RLLSTLLGVP (83 aa)). Lys38 is covalently cross-linked (Glycyl lysine isopeptide (Lys-Gly) (interchain with G-Cter in SUMO3)). The segment at 64-114 (TFTVSKYWCYRLLSTLLGVPLALLWGFLFACISFCHIWAVVPCIKSYLIEI) is required for interaction with DAG1. The segment at residues 84–104 (LALLWGFLFACISFCHIWAVV) is an intramembrane region (helical). At 105–151 (PCIKSYLIEIQCISHIYSLCIRTFCNPLFAALGQVCSNIKVMLRKEV) the chain is on the cytoplasmic side.

The protein belongs to the caveolin family. Homooligomer. Interacts with DYSF. Interacts with DLG1 and KCNA5; forms a ternary complex. Interacts with DAG1 (via its C-terminal); the interaction prevents binding of DAG1 with DMD. Interacts with TRIM72. Interacts with MUSK; may regulate MUSK signaling. Interacts with POPDC1. Interacts with CAVIN1, CAVIN2 and CAVIN4. In terms of processing, sumoylation with SUMO3 by PIAS4 may reduce agonist-induced internalization and desensitization of adrenergic receptor ABRD2.

Its subcellular location is the golgi apparatus membrane. It is found in the cell membrane. The protein resides in the membrane. The protein localises to the caveola. It localises to the sarcolemma. May act as a scaffolding protein within caveolar membranes. Interacts directly with G-protein alpha subunits and can functionally regulate their activity. May also regulate voltage-gated potassium channels. Plays a role in the sarcolemma repair mechanism of both skeletal muscle and cardiomyocytes that permits rapid resealing of membranes disrupted by mechanical stress. Mediates the recruitment of CAVIN2 and CAVIN3 proteins to the caveolae. The chain is Caveolin-3 (CAV3) from Bos taurus (Bovine).